The sequence spans 539 residues: Acid-sensing ion channel 4 (539 aa).

Topologically, residues 1–68 (MPIEIVCKIK…GPGPHGLRRT (68 aa)) are cytoplasmic. A helical membrane pass occupies residues 69 to 89 (LWALALLTSLAAFLYQAAGLA). At 90–438 (RGYLTRPHLV…EQRAAYGLSA (349 aa)) the chain is on the extracellular side. 2 cysteine pairs are disulfide-bonded: cysteine 118–cysteine 202 and cysteine 180–cysteine 187. N-linked (GlcNAc...) asparagine glycans are attached at residues asparagine 191 and asparagine 243. 5 cysteine pairs are disulfide-bonded: cysteine 296-cysteine 375, cysteine 318-cysteine 371, cysteine 322-cysteine 369, cysteine 331-cysteine 353, and cysteine 333-cysteine 345. Asparagine 376 carries N-linked (GlcNAc...) asparagine glycosylation. A helical transmembrane segment spans residues 439–459 (LLGDLGGQMGLFIGASILTLL). A GAS motif; ion selectivity filter motif is present at residues 452–454 (GAS). The Cytoplasmic segment spans residues 460 to 539 (EILDYIYEVS…PGGLFEDFAC (80 aa)). Residues 501-531 (EQSPCPSRGRVEGGGVSSLLPNHHHPHGPPG) are disordered.

The protein belongs to the amiloride-sensitive sodium channel (TC 1.A.6) family. ASIC4 subfamily. Homotrimer. Heterotrimer; with other ASIC proteins producing functional channels. As to expression, expressed in pituitary gland. Weakly expressed in brain, vestibular system and organ of Corti.

Its subcellular location is the cell membrane. Does not exhibit measurable stand-alone pH-gated sodium channel activity but may form pH-gated heterotrimeric sodium channels. Its activity could also depend on alternative gating mechanisms. The polypeptide is Acid-sensing ion channel 4 (Homo sapiens (Human)).